Consider the following 299-residue polypeptide: F-actin-capping protein subunit alpha-3 (299 aa).

Ser-2 and Ser-290 each carry phosphoserine.

It belongs to the F-actin-capping protein alpha subunit family. In terms of assembly, component of the F-actin capping complex, composed of a heterodimer of an alpha and a beta subunit. Component of the WASH complex, composed of F-actin-capping protein subunit alpha (CAPZA1, CAPZA2 or CAPZA3), F-actin-capping protein subunit beta (CAPZB), WASHC1, WASHC2, WASHC3, WASHC4 and WASHC5. As to expression, exclusively expressed in the testis.

The protein resides in the cytoplasm. Its subcellular location is the cytoskeleton. In terms of biological role, F-actin-capping proteins bind in a Ca(2+)-independent manner to the fast growing ends of actin filaments (barbed end) thereby blocking the exchange of subunits at these ends. Unlike other capping proteins (such as gelsolin and severin), these proteins do not sever actin filaments. May play a role in the morphogenesis of spermatid. The polypeptide is F-actin-capping protein subunit alpha-3 (Capza3) (Mus musculus (Mouse)).